A 261-amino-acid polypeptide reads, in one-letter code: Kallikrein 1-related peptidase b9 (261 aa).

The first 18 residues, 1–18 (MRFLILFLALSLGGIDAA), serve as a signal peptide directing secretion. The propeptide at 19–24 (PPVHSR) is activation peptide. In terms of domain architecture, Peptidase S1 spans 25-258 (IVGGFKCEKN…FTSWIKDTMA (234 aa)). 5 disulfides stabilise this stretch: Cys31-Cys173, Cys50-Cys66, Cys152-Cys219, Cys184-Cys198, and Cys209-Cys234. The active-site Charge relay system is His65. Asn102 is a glycosylation site (N-linked (GlcNAc...) asparagine). Asp120 acts as the Charge relay system in catalysis. The Charge relay system role is filled by Ser213.

This sequence belongs to the peptidase S1 family. Kallikrein subfamily.

The catalysed reaction is Preferential cleavage of Arg-|-Xaa bonds in small molecule substrates. Highly selective action to release kallidin (lysyl-bradykinin) from kininogen involves hydrolysis of Met-|-Xaa or Leu-|-Xaa.. In terms of biological role, glandular kallikreins cleave Met-Lys and Arg-Ser bonds in kininogen to release Lys-bradykinin. This Mus musculus (Mouse) protein is Kallikrein 1-related peptidase b9 (Klk1b9).